We begin with the raw amino-acid sequence, 365 residues long: Patr class I histocompatibility antigen, A-126 alpha chain (365 aa).

The signal sequence occupies residues 1–24 (MAVMAPRTLVLLLSGALALTQTWA). The alpha-1 stretch occupies residues 25-114 (GSHSMRYFST…LRGYYNQSED (90 aa)). The Extracellular portion of the chain corresponds to 25 to 308 (GSHSMRYFST…EPSSQPTIPI (284 aa)). N-linked (GlcNAc...) asparagine glycosylation is present at Asn-110. Positions 115–206 (GSHTIQLMFG…ENGKETLQRT (92 aa)) are alpha-2. Intrachain disulfides connect Cys-125–Cys-188 and Cys-227–Cys-283. The segment at 207-298 (DPPKTHMTHH…GLPKPLTLRW (92 aa)) is alpha-3. The Ig-like C1-type domain maps to 209-295 (PKTHMTHHPI…QHEGLPKPLT (87 aa)). The tract at residues 299–308 (EPSSQPTIPI) is connecting peptide. The chain crosses the membrane as a helical span at residues 309-332 (VGIIAGLVLLGAVITGAVVAAVMW). Residues 333-365 (RRKSSDRKGGSYSQAASSDSAQGSDVSLTACKV) lie on the Cytoplasmic side of the membrane. The interval 338–365 (DRKGGSYSQAASSDSAQGSDVSLTACKV) is disordered. Low complexity predominate over residues 342–359 (GSYSQAASSDSAQGSDVS). Ser-343 bears the Phosphoserine mark. Phosphotyrosine is present on Tyr-344. A phosphoserine mark is found at Ser-345, Ser-349, Ser-352, Ser-356, and Ser-359.

The protein belongs to the MHC class I family. In terms of assembly, heterodimer of an alpha chain and a beta chain (beta-2-microglobulin).

The protein localises to the membrane. In terms of biological role, involved in the presentation of foreign antigens to the immune system. The chain is Patr class I histocompatibility antigen, A-126 alpha chain (Patr-A) from Pan troglodytes (Chimpanzee).